Reading from the N-terminus, the 62-residue chain is Large ribosomal subunit protein bL32 (62 aa).

Basic residues predominate over residues 1–16 (MAVQKNRKTRSKRGMR). The segment at 1-62 (MAVQKNRKTR…VISQGDSDDE (62 aa)) is disordered. Polar residues predominate over residues 53–62 (VISQGDSDDE).

Belongs to the bacterial ribosomal protein bL32 family.

This chain is Large ribosomal subunit protein bL32, found in Alcanivorax borkumensis (strain ATCC 700651 / DSM 11573 / NCIMB 13689 / SK2).